The following is a 420-amino-acid chain: MVTLVLGSQFGDEGKGKITDLLSQNADLCCRSAGGHNAGHTIIHDNVTYDFHILPSGLISPKCVNLIGSGTVVHVPSFFKELEALEGKGLKDAHKRVFISDRAHVCFDLHSVVDGLEEATLGGRKVGTTGKGIGPCYSDKAARRGVRIGQVLDEGVVETKLRSLEAGYRRRFGELNYDLEAEINRFKEYRTLLKPFVVDQLTLLRKHKDASILIEGANALMLDIDHGTYPYVTSSCTGLGGTIQGLCLNPTQIKSIIGVVKAYSTRVGSGPFPTEQINEIGEKLQVTGREFGVTTGRKRRCGWLDLVMCRYSTAINHYTALNLTKLDILDEFDEIKVAVAYRLEGKEIEFFPSDADVLEKVEVVYDTLPGWKTNTMGITKWEDLPPNAQKYIEYIEKDIGVPIKWVGTGPARSHMIERAQ.

Residues glycine 11 to lysine 17 and glycine 39 to threonine 41 contribute to the GTP site. The active-site Proton acceptor is aspartate 12. Positions 12 and 39 each coordinate Mg(2+). Residues aspartate 12–lysine 15, asparagine 37–histidine 40, threonine 129, arginine 143, asparagine 218, threonine 233, and arginine 297 each bind IMP. Catalysis depends on histidine 40, which acts as the Proton donor. Valine 293–arginine 299 provides a ligand contact to substrate. Residues arginine 299, lysine 325–aspartate 327, and glycine 407–glycine 409 each bind GTP.

The protein belongs to the adenylosuccinate synthetase family. As to quaternary structure, homodimer. The cofactor is Mg(2+).

The protein resides in the cytoplasm. It carries out the reaction IMP + L-aspartate + GTP = N(6)-(1,2-dicarboxyethyl)-AMP + GDP + phosphate + 2 H(+). It participates in purine metabolism; AMP biosynthesis via de novo pathway; AMP from IMP: step 1/2. Functionally, plays an important role in the de novo pathway and in the salvage pathway of purine nucleotide biosynthesis. Catalyzes the first committed step in the biosynthesis of AMP from IMP. The chain is Adenylosuccinate synthetase from Uncinocarpus reesii (strain UAMH 1704).